Here is a 646-residue protein sequence, read N- to C-terminus: P-selectin (646 aa).

An N-terminal signal peptide occupies residues 1 to 41; sequence MASCPKAIWNWRFQRAVFRTVQLLCFSVLIFEVINQKEVSA. Residues 42-587 lie on the Extracellular side of the membrane; that stretch reads WTYHYSNKTY…QAGPLTIQET (546 aa). N-linked (GlcNAc...) asparagine glycosylation is found at Asn48, Asn54, and Asn80. In terms of domain architecture, C-type lectin spans 58 to 158; that stretch reads AFCQKYYTDL…PCWKRKRALC (101 aa). 17 cysteine pairs are disulfide-bonded: Cys60–Cys158, Cys131–Cys150, Cys163–Cys174, Cys168–Cys183, Cys185–Cys194, Cys200–Cys244, Cys230–Cys257, Cys262–Cys306, Cys292–Cys319, Cys324–Cys368, Cys354–Cys381, Cys386–Cys430, Cys416–Cys443, Cys458–Cys502, Cys488–Cys515, Cys520–Cys564, and Cys550–Cys577. Residues Glu121, Asn123, and Asn124 each contribute to the Ca(2+) site. Asn123 contacts a carbohydrate. The a carbohydrate site is built by Glu133 and Asn146. Asn146 and Asp147 together coordinate Ca(2+). The EGF-like domain occupies 159–195; that stretch reads YRASCQDMSCSKQGECIETIGNYTCSCYPGFYGPECE. Asn180 carries N-linked (GlcNAc...) asparagine glycosylation. 6 Sushi domains span residues 198–259, 260–321, 322–383, 384–445, 456–517, and 518–579; these read RECG…QCVA, VQCP…VCKA, LQCQ…ECQA, VTCA…TCEE, VQCP…TCRA, and VKCA…TCQA. Residues Asn212 and Asn219 are each glycosylated (N-linked (GlcNAc...) asparagine). The N-linked (GlcNAc...) asparagine glycan is linked to Asn336. A glycan (N-linked (GlcNAc...) asparagine) is linked at Asn481. N-linked (GlcNAc...) asparagine glycans are attached at residues Asn532, Asn539, and Asn557. A helical membrane pass occupies residues 588–611; the sequence is LTYVGGAAAGTTGLVTGSILLALL. At 612-646 the chain is on the cytoplasmic side; the sequence is RRRCRQKDDGKSPLNPQSHLGTYGVFTNAAFDPSP. The short motif at 634–637 is the Endocytosis signal element; the sequence is YGVF. Positions 637–646 are interaction with SNX17; it reads FTNAAFDPSP.

The protein belongs to the selectin/LECAM family. Interacts with SNX17. Interacts with SELPLG/PSGL1 and PODXL2 and mediates neutrophil adhesion and leukocyte rolling. This interaction requires the sialyl-Lewis X epitope of SELPLG and PODXL2, and specific tyrosine sulfation on SELPLG. Interacts (via C-type lectin domain) with alpha-IIb/beta3 integrin ITGA2B:ITGB3 and alpha-V/beta-3 integrin ITGAV:ITGB3. Interacts with alpha5/beta1 integrin ITGA5:ITGB1 and alpha4/beta1 integrin ITGA4:ITGB. As to expression, stored in the alpha-granules of platelets and Weibel-Palade bodies of endothelial cells. Upon cell activation by agonists, P-selectin is transported rapidly to the cell surface.

It is found in the cell membrane. In terms of biological role, ca(2+)-dependent receptor for myeloid cells that binds to carbohydrates on neutrophils and monocytes. Mediates the interaction of activated endothelial cells or platelets with leukocytes. The ligand recognized is sialyl-Lewis X. Mediates rapid rolling of leukocyte rolling over vascular surfaces during the initial steps in inflammation through interaction with SELPLG. Mediates cell-cell interactions and cell adhesion via the interaction with integrin alpha-IIb/beta3 (ITGA2B:ITGB3) and integrin alpha-V/beta-3 (ITGAV:ITGB3). This Bos taurus (Bovine) protein is P-selectin (SELP).